We begin with the raw amino-acid sequence, 64 residues long: Large ribosomal subunit protein uL29 (64 aa).

Belongs to the universal ribosomal protein uL29 family.

The chain is Large ribosomal subunit protein uL29 from Verminephrobacter eiseniae (strain EF01-2).